A 146-amino-acid polypeptide reads, in one-letter code: 3-hydroxyacyl-[acyl-carrier-protein] dehydratase FabZ (146 aa).

Residue H48 is part of the active site.

It belongs to the thioester dehydratase family. FabZ subfamily.

It localises to the cytoplasm. The enzyme catalyses a (3R)-hydroxyacyl-[ACP] = a (2E)-enoyl-[ACP] + H2O. Involved in unsaturated fatty acids biosynthesis. Catalyzes the dehydration of short chain beta-hydroxyacyl-ACPs and long chain saturated and unsaturated beta-hydroxyacyl-ACPs. This is 3-hydroxyacyl-[acyl-carrier-protein] dehydratase FabZ from Campylobacter jejuni subsp. jejuni serotype O:6 (strain 81116 / NCTC 11828).